Consider the following 167-residue polypeptide: S-ribosylhomocysteine lyase (167 aa).

Fe cation-binding residues include histidine 54, histidine 58, and cysteine 128.

Belongs to the LuxS family. In terms of assembly, homodimer. Fe cation is required as a cofactor.

It carries out the reaction S-(5-deoxy-D-ribos-5-yl)-L-homocysteine = (S)-4,5-dihydroxypentane-2,3-dione + L-homocysteine. Functionally, involved in the synthesis of autoinducer 2 (AI-2) which is secreted by bacteria and is used to communicate both the cell density and the metabolic potential of the environment. The regulation of gene expression in response to changes in cell density is called quorum sensing. Catalyzes the transformation of S-ribosylhomocysteine (RHC) to homocysteine (HC) and 4,5-dihydroxy-2,3-pentadione (DPD). The protein is S-ribosylhomocysteine lyase of Sulfurimonas denitrificans (strain ATCC 33889 / DSM 1251) (Thiomicrospira denitrificans (strain ATCC 33889 / DSM 1251)).